A 444-amino-acid polypeptide reads, in one-letter code: MSLNPSRPSSSELVELHVFYVPEGSWNYKLNTISIEVINNFISAGFIRVSPQLTLQALRERLGEFLGVDAVAEKFLFLKCIGNNLAVVKEKQESELKLKSFAPPYALQPELYLLPVIDHLGNVYSASTVTLDEQESINDTTEINGTIYRPDSVSLSKDEPGNPSLLENTWRDFTNQEEAEESQPTQNHFGNSKLLGSLEESNDYFGNLKSPFLWKNDDEEEDEEKDNAALSRRQATLVCDKECTALPDLIDFPSFPSQRVSSRLTDTSLLKIEREKIIEQMKQVKEERKYLENIREELIKKVDKLFEQNKSKRYHASDSWKKKYLDTKKVTASLEEVLTKLREDLELYYKKLLMQLEAREIKMRPRNLANISDSKNYLIIQITEVQHAIDQLKRKLDTDKMKLILEVKMRKQAVSDLQTLKADLTQKKMGAPFRPPMFSGSVPT.

A coiled-coil region spans residues 268 to 403 (SLLKIEREKI…RKLDTDKMKL (136 aa)).

As to quaternary structure, interacts with IFT20. As to expression, highly abundant in the testis, and is also expressed in the heart and kidney (at protein level).

It is found in the cytoplasmic vesicle. The protein localises to the secretory vesicle. It localises to the acrosome. The polypeptide is Spermatogenesis-associated protein 1 (Spata1) (Mus musculus (Mouse)).